We begin with the raw amino-acid sequence, 490 residues long: Betaine aldehyde dehydrogenase (490 aa).

Aspartate 93 provides a ligand contact to K(+). 150–152 (GAW) is an NAD(+) binding site. Lysine 162 serves as the catalytic Charge relay system. 176-179 (KPSE) is a binding site for NAD(+). Valine 180 provides a ligand contact to K(+). 230–233 (GIAS) contributes to the NAD(+) binding site. Leucine 246 lines the K(+) pocket. The active-site Proton acceptor is glutamate 252. 3 residues coordinate NAD(+): glycine 254, cysteine 286, and glutamate 387. Cysteine 286 functions as the Nucleophile in the catalytic mechanism. At cysteine 286 the chain carries Cysteine sulfenic acid (-SOH). Residues lysine 457 and glycine 460 each coordinate K(+). Glutamate 464 acts as the Charge relay system in catalysis.

Belongs to the aldehyde dehydrogenase family. Dimer of dimers. The cofactor is K(+).

It carries out the reaction betaine aldehyde + NAD(+) + H2O = glycine betaine + NADH + 2 H(+). Its pathway is amine and polyamine biosynthesis; betaine biosynthesis via choline pathway; betaine from betaine aldehyde: step 1/1. Involved in the biosynthesis of the osmoprotectant glycine betaine. Catalyzes the irreversible oxidation of betaine aldehyde to the corresponding acid. The protein is Betaine aldehyde dehydrogenase of Pectobacterium atrosepticum (strain SCRI 1043 / ATCC BAA-672) (Erwinia carotovora subsp. atroseptica).